Reading from the N-terminus, the 238-residue chain is Ribonuclease PH (238 aa).

Phosphate is bound by residues Arg-86 and 124–126 (GTR).

The protein belongs to the RNase PH family. In terms of assembly, homohexameric ring arranged as a trimer of dimers.

The enzyme catalyses tRNA(n+1) + phosphate = tRNA(n) + a ribonucleoside 5'-diphosphate. Functionally, phosphorolytic 3'-5' exoribonuclease that plays an important role in tRNA 3'-end maturation. Removes nucleotide residues following the 3'-CCA terminus of tRNAs; can also add nucleotides to the ends of RNA molecules by using nucleoside diphosphates as substrates, but this may not be physiologically important. Probably plays a role in initiation of 16S rRNA degradation (leading to ribosome degradation) during starvation. This is Ribonuclease PH from Yersinia enterocolitica serotype O:8 / biotype 1B (strain NCTC 13174 / 8081).